The following is a 386-amino-acid chain: ATP synthase gamma chain 2, chloroplastic (386 aa).

Positions 1-22 (MTGSISTSWLLSSPSNSNSASS) are disordered. Residues 1–60 (MTGSISTSWLLSSPSNSNSASSSESYSFIATLKPVRYYPFQSLTPNRISSRSPLPSIQIR) constitute a chloroplast transit peptide. Cys149 is a catalytic residue. Cysteines 260 and 266 form a disulfide.

The protein belongs to the ATPase gamma chain family. In terms of assembly, F-type ATPases have 2 components, CF(1) - the catalytic core - and CF(0) - the membrane proton channel. CF(1) has five subunits: alpha(3), beta(3), gamma(1), delta(1), epsilon(1). CF(0) has four main subunits: a, b, b' and c.

Its subcellular location is the plastid. The protein resides in the chloroplast thylakoid membrane. Its function is as follows. Produces ATP from ADP in the presence of a proton gradient across the membrane. The gamma chain is believed to be important in regulating ATPase activity and the flow of protons through the CF(0) complex. This is ATP synthase gamma chain 2, chloroplastic (ATPC2) from Arabidopsis thaliana (Mouse-ear cress).